A 223-amino-acid polypeptide reads, in one-letter code: Type II restriction enzyme BglII (223 aa).

2 residues coordinate Mg(2+): Asp84 and Val94.

In terms of assembly, homodimer. Mg(2+) serves as cofactor.

It carries out the reaction Endonucleolytic cleavage of DNA to give specific double-stranded fragments with terminal 5'-phosphates.. In terms of biological role, a P subtype restriction enzyme that recognizes the double-stranded sequence 5'-AGATCT-3' and cleaves after A-1. This chain is Type II restriction enzyme BglII (bglIIR), found in Bacillus subtilis.